A 523-amino-acid chain; its full sequence is Cytochrome P450 monooxygenase ple1 (523 aa).

The helical transmembrane segment at 9–29 (ALPVLAIWAAIGLAYWIDSQK) threads the bilayer. Asn141 is a glycosylation site (N-linked (GlcNAc...) asparagine). Cys444 lines the heme pocket.

Belongs to the cytochrome P450 family. Requires heme as cofactor.

The protein resides in the membrane. It participates in secondary metabolite biosynthesis; terpenoid biosynthesis. Functionally, cytochrome P450 monooxygenase; part of the gene cluster that mediates the biosynthesis of pleuromutilin, a tricyclic diterpene showing antibacterial properties. The geranylgeranyl diphosphate (GGPP) synthase ple4 catalyzes the first step in pleuromutilin biosynthesis. GGPP is then substrate of the premutilin synthase (PS) ple3 to yield premutilin. Premutilin synthase is a bifunctional enzyme composed of the fusion of a class II diterpene cyclase (DTC) and a class I diterpene synthase (DTS), with the corresponding domains and active sites containing characteristic aspartate-rich motifs. GGPP is first converted to mutildienyl-diphosphate (MPP) at the class II DTC site. MPP is subsequently further cyclized at the class I DTS site, followed by a 1,5-hydride shift and addition of water prior to terminating deprotonation, to yield premutilin. The cytochrome P450 monooxygenases ple5 and ple6 hydroxylate premutilin at C-11 and C-3, respectively, producing 11-hydroxypremutilin and 3-hydroxypremutilin. The combination of the actions of both ple5 and ple6 leads to the production of 3,11-dihydroxypremutilin. The short chain dehydrogenase ple7 further converts 3,11-dihydroxypremutilin into mutilin. The acetyltransferase ple2 then acetylates mutilin to produce 14-O-acetylmutilin. Finally, the cytochrome P450 monooxygenase ple1 catalyzes hydroxylation on the alpha position of the acetyl side chain of 14-O-acetylmutilin to yield pleuromutilin. The polypeptide is Cytochrome P450 monooxygenase ple1 (Rhodocybe pseudopiperita (Clitopilus pseudopiperitus)).